We begin with the raw amino-acid sequence, 185 residues long: MAEERQIPRMKTHYFEVIRKALQEKFNYKNAMQIPRIDKIVINMGIGEATADSKKPSLAAEDLGLITGQKAVVTRARNSIATFKVREGMPLGAKVTLRKDRMFEFLDRLVTIALPRVRDFRGLNPKSFDGRGNFAMGIKEHIVFPEINYDKVDQIWGMDIIVCTTAKTDDEARELLRAFNFPFRS.

This sequence belongs to the universal ribosomal protein uL5 family. As to quaternary structure, part of the 50S ribosomal subunit; part of the 5S rRNA/L5/L18/L25 subcomplex. Contacts the 5S rRNA and the P site tRNA. Forms a bridge to the 30S subunit in the 70S ribosome.

In terms of biological role, this is one of the proteins that bind and probably mediate the attachment of the 5S RNA into the large ribosomal subunit, where it forms part of the central protuberance. In the 70S ribosome it contacts protein S13 of the 30S subunit (bridge B1b), connecting the 2 subunits; this bridge is implicated in subunit movement. Contacts the P site tRNA; the 5S rRNA and some of its associated proteins might help stabilize positioning of ribosome-bound tRNAs. The sequence is that of Large ribosomal subunit protein uL5 from Bartonella tribocorum (strain CIP 105476 / IBS 506).